The primary structure comprises 452 residues: Phosphoglucosamine mutase (452 aa).

The active-site Phosphoserine intermediate is serine 112. Positions 112, 251, 253, and 255 each coordinate Mg(2+). Serine 112 bears the Phosphoserine mark.

This sequence belongs to the phosphohexose mutase family. Mg(2+) is required as a cofactor. In terms of processing, activated by phosphorylation.

The enzyme catalyses alpha-D-glucosamine 1-phosphate = D-glucosamine 6-phosphate. Catalyzes the conversion of glucosamine-6-phosphate to glucosamine-1-phosphate. This chain is Phosphoglucosamine mutase, found in Bordetella bronchiseptica (strain ATCC BAA-588 / NCTC 13252 / RB50) (Alcaligenes bronchisepticus).